Here is a 283-residue protein sequence, read N- to C-terminus: Quinate/shikimate dehydrogenase (NAD(+)) (283 aa).

Shikimate-binding residues include Ser-17, Thr-69, Lys-73, Asn-94, and Asp-110. Residues 17–19 (SRT), Thr-69, Lys-73, Asn-94, and Asp-110 contribute to the L-quinate site. The active-site Proton acceptor is the Lys-73. NAD(+)-binding positions include 137–138 (GV), Asp-158, Arg-163, 203–206 (PMGM), Ala-213, Val-228, and Gly-251. Gln-258 contacts shikimate. Gln-258 is an L-quinate binding site.

The protein belongs to the shikimate dehydrogenase family. Homodimer.

It catalyses the reaction L-quinate + NAD(+) = 3-dehydroquinate + NADH + H(+). The catalysed reaction is shikimate + NAD(+) = 3-dehydroshikimate + NADH + H(+). It functions in the pathway metabolic intermediate biosynthesis; chorismate biosynthesis; chorismate from D-erythrose 4-phosphate and phosphoenolpyruvate: step 4/7. The protein operates within aromatic compound metabolism; 3,4-dihydroxybenzoate biosynthesis; 3-dehydroquinate from D-quinate (NAD(+) route). In terms of biological role, involved in the biosynthesis of the chorismate, which leads to the biosynthesis of aromatic amino acids, and plays a key role in the quinate degradation pathway. Catalyzes the NAD(+)-dependent oxidation of both quinate and shikimate to 3-dehydroquinate and 3-dehydroshikimate, respectively. This is Quinate/shikimate dehydrogenase (NAD(+)) from Corynebacterium glutamicum (strain R).